Reading from the N-terminus, the 1155-residue chain is DNA-directed RNA polymerase subunit beta (1155 aa).

This sequence belongs to the RNA polymerase beta chain family. As to quaternary structure, the RNAP catalytic core consists of 2 alpha, 1 beta, 1 beta' and 1 omega subunit. When a sigma factor is associated with the core the holoenzyme is formed, which can initiate transcription.

The catalysed reaction is RNA(n) + a ribonucleoside 5'-triphosphate = RNA(n+1) + diphosphate. Its function is as follows. DNA-dependent RNA polymerase catalyzes the transcription of DNA into RNA using the four ribonucleoside triphosphates as substrates. The polypeptide is DNA-directed RNA polymerase subunit beta (Borreliella afzelii (strain PKo) (Borrelia afzelii)).